We begin with the raw amino-acid sequence, 416 residues long: Glutamyl-tRNA reductase (416 aa).

Substrate is bound by residues 49-52, S105, 110-112, and Q116; these read TCNR and EPQ. C50 (nucleophile) is an active-site residue. Residue 185 to 190 participates in NADP(+) binding; it reads GAGETI.

The protein belongs to the glutamyl-tRNA reductase family. As to quaternary structure, homodimer.

The enzyme catalyses (S)-4-amino-5-oxopentanoate + tRNA(Glu) + NADP(+) = L-glutamyl-tRNA(Glu) + NADPH + H(+). Its pathway is porphyrin-containing compound metabolism; protoporphyrin-IX biosynthesis; 5-aminolevulinate from L-glutamyl-tRNA(Glu): step 1/2. Catalyzes the NADPH-dependent reduction of glutamyl-tRNA(Glu) to glutamate 1-semialdehyde (GSA). The polypeptide is Glutamyl-tRNA reductase (Shewanella loihica (strain ATCC BAA-1088 / PV-4)).